Reading from the N-terminus, the 122-residue chain is Large ribosomal subunit protein bL12 (122 aa).

The protein belongs to the bacterial ribosomal protein bL12 family. In terms of assembly, homodimer. Part of the ribosomal stalk of the 50S ribosomal subunit. Forms a multimeric L10(L12)X complex, where L10 forms an elongated spine to which 2 to 4 L12 dimers bind in a sequential fashion. Binds GTP-bound translation factors.

Forms part of the ribosomal stalk which helps the ribosome interact with GTP-bound translation factors. Is thus essential for accurate translation. The polypeptide is Large ribosomal subunit protein bL12 (Stenotrophomonas maltophilia (strain R551-3)).